Reading from the N-terminus, the 202-residue chain is Complement component C8 gamma chain (202 aa).

A signal peptide spans 1-23; sequence MVLRGRAVLLAVLLAAGSLGRWA. Cysteine 96 and cysteine 188 are disulfide-bonded. N-linked (GlcNAc...) asparagine glycosylation occurs at asparagine 173.

This sequence belongs to the calycin superfamily. Lipocalin family. In terms of assembly, heterotrimer of 3 chains: alpha (C8A), beta (C8B) and gamma (C8G); the alpha and gamma chains are disulfide bonded. Component of the membrane attack complex (MAC), composed of complement C5b, C6, C7, C8A, C8B, C8G and multiple copies of the pore-forming subunit C9.

It is found in the secreted. It localises to the target cell membrane. Its activity is regulated as follows. Membrane attack complex (MAC) assembly is inhibited by CD59, thereby protecting self-cells from damage during complement activation. MAC assembly is also inhibited by clusterin (CLU) chaperones that inhibit polymerization of C9. Functionally, component of the membrane attack complex (MAC), a multiprotein complex activated by the complement cascade, which inserts into a target cell membrane and forms a pore, leading to target cell membrane rupture and cell lysis. The MAC is initiated by proteolytic cleavage of C5 into complement C5b in response to the classical, alternative, lectin and GZMK complement pathways. The complement pathways consist in a cascade of proteins that leads to phagocytosis and breakdown of pathogens and signaling that strengthens the adaptive immune system. C8G, together with C8A and C8B, inserts into the target membrane, but does not form pores by itself. During MAC assembly, associates with C5b, C6 and C7 to form the C5b8 intermediate complex that inserts into the target membrane and traverses the bilayer increasing membrane rigidity. The chain is Complement component C8 gamma chain (C8G) from Oryctolagus cuniculus (Rabbit).